The primary structure comprises 340 residues: UPF0324 membrane protein BC_5174 (340 aa).

10 helical membrane-spanning segments follow: residues 13-35 (FGFS…LAEL), 40-59 (IMGQ…AAIG), 99-118 (VLVI…YGLT), 128-150 (GILT…APQV), 157-179 (TAVG…TLLY), 189-211 (YGVF…APGG), 218-240 (AVIV…GLWF), 255-277 (LPIP…GIIP), 279-301 (VVAG…GLGL), and 316-338 (FVAG…YALG).

The protein belongs to the UPF0324 family.

Its subcellular location is the cell membrane. This chain is UPF0324 membrane protein BC_5174, found in Bacillus cereus (strain ATCC 14579 / DSM 31 / CCUG 7414 / JCM 2152 / NBRC 15305 / NCIMB 9373 / NCTC 2599 / NRRL B-3711).